The following is a 213-amino-acid chain: Pyridoxine/pyridoxamine 5'-phosphate oxidase (213 aa).

FMN contacts are provided by residues 60–65 (RMVLMK), 75–76 (YS), K82, and Q104. K65 contacts substrate. Substrate contacts are provided by Y122 and R126. Residues 139–140 (QS) and W184 each bind FMN. Residue 190–192 (RLH) coordinates substrate. Residue R194 coordinates FMN.

Belongs to the pyridoxamine 5'-phosphate oxidase family. Homodimer. The cofactor is FMN.

It catalyses the reaction pyridoxamine 5'-phosphate + O2 + H2O = pyridoxal 5'-phosphate + H2O2 + NH4(+). The enzyme catalyses pyridoxine 5'-phosphate + O2 = pyridoxal 5'-phosphate + H2O2. Its pathway is cofactor metabolism; pyridoxal 5'-phosphate salvage; pyridoxal 5'-phosphate from pyridoxamine 5'-phosphate: step 1/1. It functions in the pathway cofactor metabolism; pyridoxal 5'-phosphate salvage; pyridoxal 5'-phosphate from pyridoxine 5'-phosphate: step 1/1. In terms of biological role, catalyzes the oxidation of either pyridoxine 5'-phosphate (PNP) or pyridoxamine 5'-phosphate (PMP) into pyridoxal 5'-phosphate (PLP). In Bradyrhizobium diazoefficiens (strain JCM 10833 / BCRC 13528 / IAM 13628 / NBRC 14792 / USDA 110), this protein is Pyridoxine/pyridoxamine 5'-phosphate oxidase.